Here is a 346-residue protein sequence, read N- to C-terminus: Phenylalanine--tRNA ligase alpha subunit (346 aa).

Residue E260 participates in Mg(2+) binding.

This sequence belongs to the class-II aminoacyl-tRNA synthetase family. Phe-tRNA synthetase alpha subunit type 1 subfamily. As to quaternary structure, tetramer of two alpha and two beta subunits. Mg(2+) serves as cofactor.

It localises to the cytoplasm. It catalyses the reaction tRNA(Phe) + L-phenylalanine + ATP = L-phenylalanyl-tRNA(Phe) + AMP + diphosphate + H(+). In Herpetosiphon aurantiacus (strain ATCC 23779 / DSM 785 / 114-95), this protein is Phenylalanine--tRNA ligase alpha subunit.